Here is a 328-residue protein sequence, read N- to C-terminus: Tryptophan--tRNA ligase (328 aa).

Residues 9-11 and 17-18 contribute to the ATP site; these read QPS and GN. The 'HIGH' region signature appears at 10–18; that stretch reads PSGVITIGN. Position 132 (Asp132) interacts with L-tryptophan. ATP-binding positions include 144 to 146, Ile183, and 192 to 196; these read GED and KMSKS. Positions 192–196 match the 'KMSKS' region motif; the sequence is KMSKS.

Belongs to the class-I aminoacyl-tRNA synthetase family. Homodimer.

The protein resides in the cytoplasm. The enzyme catalyses tRNA(Trp) + L-tryptophan + ATP = L-tryptophyl-tRNA(Trp) + AMP + diphosphate + H(+). Inhibited by indolmycin, a competitive inhibitor for tryptophan. Its function is as follows. Catalyzes the attachment of tryptophan to tRNA(Trp). In Geobacillus stearothermophilus (Bacillus stearothermophilus), this protein is Tryptophan--tRNA ligase.